The primary structure comprises 274 residues: 3-methyl-2-oxobutanoate hydroxymethyltransferase (274 aa).

The Mg(2+) site is built by Asp50 and Asp89. Residues 50–51 (DS), Asp89, and Lys119 each bind 3-methyl-2-oxobutanoate. Glu121 serves as a coordination point for Mg(2+). The active-site Proton acceptor is Glu188.

It belongs to the PanB family. In terms of assembly, homodecamer; pentamer of dimers. The cofactor is Mg(2+).

The protein localises to the cytoplasm. The catalysed reaction is 3-methyl-2-oxobutanoate + (6R)-5,10-methylene-5,6,7,8-tetrahydrofolate + H2O = 2-dehydropantoate + (6S)-5,6,7,8-tetrahydrofolate. Its pathway is cofactor biosynthesis; (R)-pantothenate biosynthesis; (R)-pantoate from 3-methyl-2-oxobutanoate: step 1/2. Functionally, catalyzes the reversible reaction in which hydroxymethyl group from 5,10-methylenetetrahydrofolate is transferred onto alpha-ketoisovalerate to form ketopantoate. The protein is 3-methyl-2-oxobutanoate hydroxymethyltransferase of Methylorubrum extorquens (strain PA1) (Methylobacterium extorquens).